The chain runs to 216 residues: MPLYVIDKPLTLHILTQLRDKNTDQINFRKNLVRLGRILGYEIANTLDYEIVEVETPLGARTKGIDITDLNNIVIINILRAAVPLVEGLLKAFPKARQGVIGASRVEVDGKEVPKDMDVYIYYKKIPNIRAKVDNVIIADPMIATASTMLKVLEEVVRANPKRIYIVSIISSEYGANKILSKYPFIYLFTVTIDPELNNKGYILPGLGDAGDRAFG.

Position 30–34 (30–34 (KNLVR)) interacts with GTP. Residues arginine 80, arginine 105, and 140 to 148 (DPMIATAST) each bind 5-phospho-alpha-D-ribose 1-diphosphate. Residues isoleucine 203 and 208-210 (GDA) contribute to the uracil site. Aspartate 209 contacts 5-phospho-alpha-D-ribose 1-diphosphate.

Belongs to the UPRTase family. Mg(2+) is required as a cofactor.

The enzyme catalyses UMP + diphosphate = 5-phospho-alpha-D-ribose 1-diphosphate + uracil. It participates in pyrimidine metabolism; UMP biosynthesis via salvage pathway; UMP from uracil: step 1/1. With respect to regulation, allosterically activated by GTP. Functionally, catalyzes the conversion of uracil and 5-phospho-alpha-D-ribose 1-diphosphate (PRPP) to UMP and diphosphate. The polypeptide is Uracil phosphoribosyltransferase (Saccharolobus islandicus (strain Y.N.15.51 / Yellowstone #2) (Sulfolobus islandicus)).